A 349-amino-acid polypeptide reads, in one-letter code: Isopentenyl-diphosphate delta-isomerase (349 aa).

12-13 (RK) is a substrate binding site. FMN is bound by residues 69–71 (GMT), S99, and N128. A substrate-binding site is contributed by Q158. Residue E159 participates in Mg(2+) binding. Residues K189, S214, T219, 265-267 (GIR), and 286-287 (SG) contribute to the FMN site.

The protein belongs to the IPP isomerase type 2 family. Homooctamer. Dimer of tetramers. It depends on FMN as a cofactor. The cofactor is NADPH. Requires Mg(2+) as cofactor.

The protein localises to the cytoplasm. It carries out the reaction isopentenyl diphosphate = dimethylallyl diphosphate. Involved in the biosynthesis of isoprenoids. Catalyzes the 1,3-allylic rearrangement of the homoallylic substrate isopentenyl (IPP) to its allylic isomer, dimethylallyl diphosphate (DMAPP). The sequence is that of Isopentenyl-diphosphate delta-isomerase from Latilactobacillus sakei subsp. sakei (strain 23K) (Lactobacillus sakei subsp. sakei).